The chain runs to 479 residues: RAC-gamma serine/threonine-protein kinase (479 aa).

Ser-2 is subject to N-acetylserine. The PH domain occupies 5 to 107 (TIVKEGWVQK…WTEAIQAVAD (103 aa)). Cys-59 and Cys-76 form a disulfide bridge. A Protein kinase domain is found at 148 to 405 (FDYLKLLGKG…AKEIMRHSFF (258 aa)). ATP contacts are provided by residues 154–162 (LGKGTFGKV) and Lys-177. Asp-271 functions as the Proton acceptor in the catalytic mechanism. Cys-293 and Cys-307 form a disulfide bridge. O-linked (GlcNAc) threonine glycosylation occurs at Thr-302. Thr-305 carries the phosphothreonine; by PDPK1 modification. Residue Thr-309 is glycosylated (O-linked (GlcNAc) threonine). Residues 406–479 (SGVNWQDVYD…QFSYSASGRE (74 aa)) enclose the AGC-kinase C-terminal domain. Thr-447 is subject to Phosphothreonine. The disordered stretch occupies residues 458-479 (DCMDNERRPHFPQFSYSASGRE). Ser-472 carries the post-translational modification Phosphoserine; by PKC/PRKCZ. Ser-472 carries an O-linked (GlcNAc) serine; alternate glycan.

The protein belongs to the protein kinase superfamily. AGC Ser/Thr protein kinase family. RAC subfamily. In terms of assembly, interacts (via PH domain) with TCL1A; this enhances AKT3 phosphorylation and activation. Interacts with TRAF6. Interacts with KCTD20. Interacts with BTBD10. Post-translationally, phosphorylation on Thr-305 and Ser-472 is required for full activity. Phosphorylation of the activation loop at Thr-305 by PDPK1/PDK1 is a prerequisite for full activation. Phosphorylation at Ser-472 by mTORC2 in response to growth factors plays a key role in AKT1 activation by facilitating subsequent phosphorylation of the activation loop by PDPK1/PDK1. Ubiquitinated. When fully phosphorylated and translocated into the nucleus, undergoes 'Lys-48'-polyubiquitination catalyzed by TTC3, leading to its degradation by the proteasome. In terms of processing, O-GlcNAcylation at Thr-302 and Thr-309 inhibits activating phosphorylation at Thr-305 via disrupting the interaction between AKT and PDPK1/PDK1. As to expression, in adult tissues, it is highly expressed in brain, lung and kidney, but weakly in heart, testis and liver. In fetal tissues, it is highly expressed in heart, liver and brain and not at all in kidney.

Its subcellular location is the nucleus. It is found in the cytoplasm. The protein resides in the membrane. It carries out the reaction L-seryl-[protein] + ATP = O-phospho-L-seryl-[protein] + ADP + H(+). The enzyme catalyses L-threonyl-[protein] + ATP = O-phospho-L-threonyl-[protein] + ADP + H(+). Two specific sites, one in the kinase domain (Thr-305) and the other in the C-terminal regulatory region (Ser-472), need to be phosphorylated for its full activation. IGF-1 leads to the activation of AKT3, which may play a role in regulating cell survival. In terms of biological role, AKT3 is one of 3 closely related serine/threonine-protein kinases (AKT1, AKT2 and AKT3) called the AKT kinase, and which regulate many processes including metabolism, proliferation, cell survival, growth and angiogenesis. This is mediated through serine and/or threonine phosphorylation of a range of downstream substrates. Over 100 substrate candidates have been reported so far, but for most of them, no isoform specificity has been reported. AKT3 is the least studied AKT isoform. It plays an important role in brain development and is crucial for the viability of malignant glioma cells. AKT3 isoform may also be the key molecule in up-regulation and down-regulation of MMP13 via IL13. Required for the coordination of mitochondrial biogenesis with growth factor-induced increases in cellular energy demands. Down-regulation by RNA interference reduces the expression of the phosphorylated form of BAD, resulting in the induction of caspase-dependent apoptosis. This chain is RAC-gamma serine/threonine-protein kinase (AKT3), found in Homo sapiens (Human).